We begin with the raw amino-acid sequence, 165 residues long: Neurotrophin-3 (165 aa).

A signal peptide spans 1–3 (IQS). Positions 4–119 (TSMDQGSLSE…VLNQTSRRKR (116 aa)) are excised as a propeptide. An N-linked (GlcNAc...) asparagine glycan is attached at Asn112.

This sequence belongs to the NGF-beta family.

Its subcellular location is the secreted. Functionally, seems to promote the survival of visceral and proprioceptive sensory neurons. The chain is Neurotrophin-3 (NTF3) from Morelia spilota (Carpet python).